The following is a 258-amino-acid chain: Acyl-[acyl-carrier-protein]--UDP-N-acetylglucosamine O-acyltransferase (258 aa).

It belongs to the transferase hexapeptide repeat family. LpxA subfamily. In terms of assembly, homotrimer.

It is found in the cytoplasm. It carries out the reaction a (3R)-hydroxyacyl-[ACP] + UDP-N-acetyl-alpha-D-glucosamine = a UDP-3-O-[(3R)-3-hydroxyacyl]-N-acetyl-alpha-D-glucosamine + holo-[ACP]. It participates in glycolipid biosynthesis; lipid IV(A) biosynthesis; lipid IV(A) from (3R)-3-hydroxytetradecanoyl-[acyl-carrier-protein] and UDP-N-acetyl-alpha-D-glucosamine: step 1/6. Involved in the biosynthesis of lipid A, a phosphorylated glycolipid that anchors the lipopolysaccharide to the outer membrane of the cell. The polypeptide is Acyl-[acyl-carrier-protein]--UDP-N-acetylglucosamine O-acyltransferase (Neisseria gonorrhoeae (strain ATCC 700825 / FA 1090)).